A 300-amino-acid polypeptide reads, in one-letter code: Junctional adhesion molecule A (300 aa).

The N-terminal stretch at M1–G26 is a signal peptide. Residues K27 to G238 lie on the Extracellular side of the membrane. Ig-like V-type domains are found at residues G28–S122 and P134–D230. Residue N42 is glycosylated (N-linked (GlcNAc...) asparagine). 2 disulfides stabilise this stretch: C49–C108 and C152–C212. The N-linked (GlcNAc...) asparagine glycan is linked to N185. The chain crosses the membrane as a helical span at residues I239 to F259. Residues A260–L299 lie on the Cytoplasmic side of the membrane. Phosphoserine occurs at positions 282, 285, and 288.

This sequence belongs to the immunoglobulin superfamily. Interacts with the ninth PDZ domain of MPDZ. Interacts with the first PDZ domain of PARD3. The association between PARD3 and PARD6B probably disrupts this interaction. Interacts with ITGAL (via I-domain). Interacts with CD151.

It localises to the cell junction. The protein resides in the tight junction. It is found in the cell membrane. Functionally, seems to play a role in epithelial tight junction formation. Appears early in primordial forms of cell junctions and recruits PARD3. The association of the PARD6-PARD3 complex may prevent the interaction of PARD3 with JAM1, thereby preventing tight junction assembly. Plays a role in regulating monocyte transmigration involved in integrity of epithelial barrier. Ligand for integrin alpha-L/beta-2 involved in memory T-cell and neutrophil transmigration. Involved in platelet activation. This Mus musculus (Mouse) protein is Junctional adhesion molecule A (F11r).